A 100-amino-acid chain; its full sequence is Urease subunit gamma (100 aa).

The protein belongs to the urease gamma subunit family. In terms of assembly, heterotrimer of UreA (gamma), UreB (beta) and UreC (alpha) subunits. Three heterotrimers associate to form the active enzyme.

Its subcellular location is the cytoplasm. The enzyme catalyses urea + 2 H2O + H(+) = hydrogencarbonate + 2 NH4(+). Its pathway is nitrogen metabolism; urea degradation; CO(2) and NH(3) from urea (urease route): step 1/1. This Corynebacterium glutamicum (strain R) protein is Urease subunit gamma.